Reading from the N-terminus, the 475-residue chain is Ankyrin repeat, SAM and basic leucine zipper domain-containing protein 1 (475 aa).

Positions Met-1 to Lys-38 are disordered. Phosphoserine is present on residues Ser-17, Ser-18, and Ser-20. ANK repeat units lie at residues Glu-45 to Ser-74, Tyr-78 to Phe-107, Asp-110 to Val-144, Arg-148 to Ile-177, Asn-181 to Leu-210, and Asp-214 to Gly-243. The SAM domain maps to Ser-272–Glu-334.

Interacts with DDX4, PIWIL1, RANBP9 and TDRD1.

It is found in the cytoplasm. Functionally, plays a central role during spermatogenesis by repressing transposable elements and preventing their mobilization, which is essential for the germline integrity. Acts via the piRNA metabolic process, which mediates the repression of transposable elements during meiosis by forming complexes composed of piRNAs and Piwi proteins and governs the methylation and subsequent repression of transposons. Its association with pi-bodies suggests a participation in the primary piRNAs metabolic process. Required prior to the pachytene stage to facilitate the production of multiple types of piRNAs, including those associated with repeats involved in the regulation of retrotransposons. May act by mediating protein-protein interactions during germ cell maturation. The protein is Ankyrin repeat, SAM and basic leucine zipper domain-containing protein 1 (ASZ1) of Oryctolagus cuniculus (Rabbit).